The primary structure comprises 519 residues: Signal transduction histidine-protein kinase/phosphatase MprB (519 aa).

Topologically, residues 1–26 (MVRFAWRRRASLRATSSLSLRWRVML) are cytoplasmic. A helical membrane pass occupies residues 27-47 (LAMSMVAMVVVLMAFAVYVVI). Over 48-163 (SAALYSDIDN…PTEAVMTKLR (116 aa)) the chain is Extracellular. Residues 164 to 184 (WVLLIVGSLGVAVAAVAGGMV) form a helical membrane-spanning segment. Residues 185–519 (TRAGLRPVGR…SVDYQSARAR (335 aa)) lie on the Cytoplasmic side of the membrane. An HAMP domain is found at 186-238 (RAGLRPVGRLTEAAERVARTDDLRPIPVFGSDELARLTEAFNLMLRALAESRE). In terms of domain architecture, Histidine kinase spans 246–466 (DAGHELRTPL…SIYVLLPGRP (221 aa)). H249 carries the phosphohistidine; by autocatalysis modification.

The cofactor is Mg(2+). Requires Mn(2+) as cofactor. Autophosphorylated.

The protein localises to the cell membrane. The catalysed reaction is ATP + protein L-histidine = ADP + protein N-phospho-L-histidine.. Its function is as follows. Member of the two-component regulatory system MprB/MprA which contributes to maintaining a balance among several systems involved in stress resistance and is required for establishment and maintenance of persistent infection in the host. In response to environmental signals MprB acts both as a membrane-associated protein kinase that undergoes autophosphorylation and subsequently transfers the phosphate to MprA, and a protein phosphatase that dephosphorylates phospho-MprA. The chain is Signal transduction histidine-protein kinase/phosphatase MprB (mprB) from Mycobacterium leprae (strain TN).